We begin with the raw amino-acid sequence, 89 residues long: Large ribosomal subunit protein eL43 (89 aa).

Residues 1–28 (MVKKSKVGSTGRFGARYGRKAKRTVKDI) form a disordered region. A C4-type zinc finger spans residues 38-59 (CPKCDRPGVKRTHAGIWKCRKC).

It belongs to the eukaryotic ribosomal protein eL43 family. Zn(2+) is required as a cofactor.

The protein is Large ribosomal subunit protein eL43 of Methanosphaera stadtmanae (strain ATCC 43021 / DSM 3091 / JCM 11832 / MCB-3).